Reading from the N-terminus, the 530-residue chain is Calcium-dependent protein kinase 14 (530 aa).

A lipid anchor (N-myristoyl glycine) is attached at Gly2. A Protein kinase domain is found at 54–312; it reads YKLGRELGRG…AQQVLDHPWI (259 aa). Residues 60 to 68 and Lys83 contribute to the ATP site; that span reads LGRGEFGVT. Catalysis depends on Asp178, which acts as the Proton acceptor. Ser218 is subject to Phosphoserine. The segment at 318-348 is autoinhibitory domain; it reads ASNVSLGETVRARLKQFSVMNKLKKRALRVI. 4 EF-hand domains span residues 355–390, 391–426, 427–462, and 463–498; these read EETS…LGIV, VPQD…IRKL, GNDE…DVDT, and TSEE…GTDW. The Ca(2+) site is built by Asp368, Ser370, Lys374, Glu379, Asp404, Asp406, Asp408, Tyr410, Glu415, Asp440, Asn442, Ser444, Tyr446, Glu451, Asp476, Asn478, Asp480, and Lys482. Ser484 carries the phosphoserine modification. Residue Glu487 coordinates Ca(2+).

Belongs to the protein kinase superfamily. Ser/Thr protein kinase family. CDPK subfamily.

The protein localises to the membrane. The catalysed reaction is L-seryl-[protein] + ATP = O-phospho-L-seryl-[protein] + ADP + H(+). It carries out the reaction L-threonyl-[protein] + ATP = O-phospho-L-threonyl-[protein] + ADP + H(+). Its activity is regulated as follows. Activated by calcium. Autophosphorylation may play an important role in the regulation of the kinase activity. Its function is as follows. May play a role in signal transduction pathways that involve calcium as a second messenger. The chain is Calcium-dependent protein kinase 14 (CPK14) from Arabidopsis thaliana (Mouse-ear cress).